A 353-amino-acid polypeptide reads, in one-letter code: 41 kDa protein (353 aa).

A disordered region spans residues 132 to 197 (QSSHASALEQ…DNNSSDTIKD (66 aa)). The segment covering 157-169 (LDNKGKSDSENCN) has biased composition (basic and acidic residues).

The protein is 41 kDa protein of Lactobacillus helveticus (Lactobacillus suntoryeus).